The chain runs to 474 residues: Adenosylhomocysteinase (474 aa).

Positions 53, 135, and 197 each coordinate substrate. 198-200 (TTT) contributes to the NAD(+) binding site. Positions 227 and 231 each coordinate substrate. Residues Asn-232, 261-266 (GYGDVG), Glu-284, Asn-319, 340-342 (IGH), and Asn-388 contribute to the NAD(+) site.

The protein belongs to the adenosylhomocysteinase family. NAD(+) serves as cofactor.

Its subcellular location is the cytoplasm. It carries out the reaction S-adenosyl-L-homocysteine + H2O = L-homocysteine + adenosine. It participates in amino-acid biosynthesis; L-homocysteine biosynthesis; L-homocysteine from S-adenosyl-L-homocysteine: step 1/1. In terms of biological role, may play a key role in the regulation of the intracellular concentration of adenosylhomocysteine. This is Adenosylhomocysteinase from Corynebacterium glutamicum (strain ATCC 13032 / DSM 20300 / JCM 1318 / BCRC 11384 / CCUG 27702 / LMG 3730 / NBRC 12168 / NCIMB 10025 / NRRL B-2784 / 534).